We begin with the raw amino-acid sequence, 154 residues long: Endoribonuclease YbeY (154 aa).

Zn(2+) contacts are provided by His-117, His-121, and His-127.

This sequence belongs to the endoribonuclease YbeY family. Requires Zn(2+) as cofactor.

The protein resides in the cytoplasm. Its function is as follows. Single strand-specific metallo-endoribonuclease involved in late-stage 70S ribosome quality control and in maturation of the 3' terminus of the 16S rRNA. This chain is Endoribonuclease YbeY, found in Aromatoleum aromaticum (strain DSM 19018 / LMG 30748 / EbN1) (Azoarcus sp. (strain EbN1)).